Consider the following 469-residue polypeptide: Programmed cell death protein 4 (469 aa).

N-acetylmethionine is present on Met1. The span at 1–23 (MDIENEQTLNVNPTDPDNLSDSL) shows a compositional bias: polar residues. 2 disordered regions span residues 1 to 37 (MDIE…EEIK) and 58 to 128 (KAKR…GTPG). Phosphoserine is present on Ser25. The Nuclear localization signal motif lies at 58-64 (KAKRRLR). Ser67 carries the post-translational modification Phosphoserine; by PKB and RPS6KB1. Ser68, Ser71, Ser76, Ser78, and Ser94 each carry phosphoserine. The Phosphodegron signature appears at 70 to 76 (DSGRGDS). The segment covering 114–125 (KKGGAGGKGVWG) has biased composition (gly residues). The residue at position 152 (Tyr152) is a Phosphotyrosine. An MI 1 domain is found at 163–284 (AFEKTLTPII…CNTYIDSYKG (122 aa)). Phosphoserine is present on residues Ser313 and Ser317. The region spanning 326–449 (HLVKEIDMLL…SKQLRDLCPS (124 aa)) is the MI 2 domain. A Nuclear localization signal motif is present at residues 448-454 (PSRGRKR). Position 457 is a phosphoserine; by PKB (Ser457).

This sequence belongs to the PDCD4 family. As to quaternary structure, interacts (via MI domains) with EIF4A1 and EIF4A2 (via N-terminal domain). Heterotrimer with EIF4A1; one molecule of PDCD4 binds two molecules of EIF4A1. Interacts with EIF4G1. May form a complex with EIF4A1 and EIF4G1. The interaction between PDCD4 and EIF4A1 interferes with the interaction between EIF4A1 and EIF4G. When phosphorylated, interacts with BTRC and FBXW11. In terms of processing, polyubiquitinated, leading to its proteasomal degradation. Rapidly degraded in response to mitogens. Phosphorylation of the phosphodegron promotes interaction with BTRC and proteasomal degradation. Post-translationally, phosphorylated at Ser-67 by RPS6KB1 in response to mitogens; phosphorylation promotes proteasomal degradation of PDCD4. As to expression, expressed ubiquitously. Highyly expressed in thymus and liver. Moderately expressed in brain, kidney and spleen; weakly in lung and heart. Expression is up- or down-regulated in response to apoptosis inducers. Regulated by many programmed cell death-inducing stimuli.

It is found in the nucleus. The protein localises to the cytoplasm. In terms of biological role, inhibits translation initiation and cap-dependent translation. May excert its function by hindering the interaction between EIF4A1 and EIF4G. Inhibits the helicase activity of EIF4A. Modulates the activation of JUN kinase. Down-regulates the expression of MAP4K1, thus inhibiting events important in driving invasion, namely, MAPK85 activation and consequent JUN-dependent transcription. May play a role in apoptosis. Tumor suppressor. Inhibits tumor promoter-induced neoplastic transformation. Binds RNA. The chain is Programmed cell death protein 4 (Pdcd4) from Mus musculus (Mouse).